The chain runs to 206 residues: Imidazoleglycerol-phosphate dehydratase (206 aa).

Belongs to the imidazoleglycerol-phosphate dehydratase family.

It localises to the cytoplasm. The catalysed reaction is D-erythro-1-(imidazol-4-yl)glycerol 3-phosphate = 3-(imidazol-4-yl)-2-oxopropyl phosphate + H2O. The protein operates within amino-acid biosynthesis; L-histidine biosynthesis; L-histidine from 5-phospho-alpha-D-ribose 1-diphosphate: step 6/9. The protein is Imidazoleglycerol-phosphate dehydratase of Leptospira borgpetersenii serovar Hardjo-bovis (strain JB197).